Consider the following 205-residue polypeptide: Outer-membrane lipoprotein carrier protein (205 aa).

An N-terminal signal peptide occupies residues 1–19; that stretch reads MKKIIICFIFVFSINVSFA.

The protein belongs to the LolA family. Monomer.

The protein resides in the periplasm. Functionally, participates in the translocation of lipoproteins from the inner membrane to the outer membrane. Only forms a complex with a lipoprotein if the residue after the N-terminal Cys is not an aspartate (The Asp acts as a targeting signal to indicate that the lipoprotein should stay in the inner membrane). The sequence is that of Outer-membrane lipoprotein carrier protein from Francisella tularensis subsp. tularensis (strain FSC 198).